The chain runs to 130 residues: Small ribosomal subunit protein uS9 (130 aa).

This sequence belongs to the universal ribosomal protein uS9 family.

The chain is Small ribosomal subunit protein uS9 from Aliivibrio fischeri (strain MJ11) (Vibrio fischeri).